A 328-amino-acid polypeptide reads, in one-letter code: N-acetyl-gamma-glutamyl-phosphate reductase (328 aa).

Residue cysteine 143 is part of the active site.

It belongs to the NAGSA dehydrogenase family. Type 1 subfamily.

The protein localises to the cytoplasm. The enzyme catalyses N-acetyl-L-glutamate 5-semialdehyde + phosphate + NADP(+) = N-acetyl-L-glutamyl 5-phosphate + NADPH + H(+). Its pathway is amino-acid biosynthesis; L-arginine biosynthesis; N(2)-acetyl-L-ornithine from L-glutamate: step 3/4. Functionally, catalyzes the NADPH-dependent reduction of N-acetyl-5-glutamyl phosphate to yield N-acetyl-L-glutamate 5-semialdehyde. The sequence is that of N-acetyl-gamma-glutamyl-phosphate reductase from Methanoregula boonei (strain DSM 21154 / JCM 14090 / 6A8).